Consider the following 325-residue polypeptide: Heat-inducible transcription repressor HrcA (325 aa).

It belongs to the HrcA family.

Functionally, negative regulator of class I heat shock genes (grpE-dnaK-dnaJ and groELS operons). Prevents heat-shock induction of these operons. This Staphylococcus aureus (strain bovine RF122 / ET3-1) protein is Heat-inducible transcription repressor HrcA.